The primary structure comprises 264 residues: Phosphonoacetaldehyde hydrolase (264 aa).

Residue Asp9 is the Nucleophile of the active site. Mg(2+)-binding residues include Asp9 and Ala11. The active-site Schiff-base intermediate with substrate is the Lys50. Asp183 contacts Mg(2+).

It belongs to the HAD-like hydrolase superfamily. PhnX family. Homodimer. Mg(2+) serves as cofactor.

It catalyses the reaction phosphonoacetaldehyde + H2O = acetaldehyde + phosphate + H(+). Involved in phosphonate degradation. The polypeptide is Phosphonoacetaldehyde hydrolase (Bacillus thuringiensis (strain Al Hakam)).